The sequence spans 135 residues: Insoluble matrix shell protein 5 (135 aa).

The first 16 residues, 1-16 (MILVVTLACLIAVVCC), serve as a signal peptide directing secretion. 2 consecutive EF-hand domains span residues 21–56 (TDQG…ADLN) and 93–128 (IEFV…TVRP). Residues aspartate 34, aspartate 36, asparagine 38, lysine 40, glutamate 45, aspartate 106, asparagine 108, aspartate 110, glutamate 112, and glutamate 117 each contribute to the Ca(2+) site.

In terms of tissue distribution, component of the acid-insoluble organic matrix of the calcified shell.

It localises to the secreted. This Ruditapes philippinarum (Japanese carpet shell) protein is Insoluble matrix shell protein 5.